The primary structure comprises 216 residues: Phosphatidylserine decarboxylase proenzyme (216 aa).

The Schiff-base intermediate with substrate; via pyruvic acid role is filled by Ser185. At Ser185 the chain carries Pyruvic acid (Ser); by autocatalysis.

It belongs to the phosphatidylserine decarboxylase family. PSD-A subfamily. Heterodimer of a large membrane-associated beta subunit and a small pyruvoyl-containing alpha subunit. Pyruvate serves as cofactor. In terms of processing, is synthesized initially as an inactive proenzyme. Formation of the active enzyme involves a self-maturation process in which the active site pyruvoyl group is generated from an internal serine residue via an autocatalytic post-translational modification. Two non-identical subunits are generated from the proenzyme in this reaction, and the pyruvate is formed at the N-terminus of the alpha chain, which is derived from the carboxyl end of the proenzyme. The post-translation cleavage follows an unusual pathway, termed non-hydrolytic serinolysis, in which the side chain hydroxyl group of the serine supplies its oxygen atom to form the C-terminus of the beta chain, while the remainder of the serine residue undergoes an oxidative deamination to produce ammonia and the pyruvoyl prosthetic group on the alpha chain.

The protein localises to the cell membrane. The enzyme catalyses a 1,2-diacyl-sn-glycero-3-phospho-L-serine + H(+) = a 1,2-diacyl-sn-glycero-3-phosphoethanolamine + CO2. It participates in phospholipid metabolism; phosphatidylethanolamine biosynthesis; phosphatidylethanolamine from CDP-diacylglycerol: step 2/2. Functionally, catalyzes the formation of phosphatidylethanolamine (PtdEtn) from phosphatidylserine (PtdSer). In Nitrosomonas europaea (strain ATCC 19718 / CIP 103999 / KCTC 2705 / NBRC 14298), this protein is Phosphatidylserine decarboxylase proenzyme.